A 261-amino-acid chain; its full sequence is MASVKSRVFAITGGASGIGAATSRLLAERGATAVCVGDISCKNFDELKESMKKINPATEVHCSLLDVTSPTEVEKWVKSIVAKFGNLHGAANIAGIAQGAGLRNSPTILEEGDEEWSKVLKVNLDGVFYCTRAEVRAMKSLPSDDRSIVNVGSIAALSHIPDVYAYGTSKGASTYFTTCVAADTFPFGIRVNSVSPGITDTPLLPQFIPKAKTSDEVKEVYRKEGFSVVKAGDVARTIVWLLSEDSSPVYGANINVGASMP.

The signal sequence occupies residues 1-20; the sequence is MASVKSRVFAITGGASGIGA. Positions 18, 48, 66, 132, 166, 170, and 201 each coordinate NADP(+). Catalysis depends on Tyr-166, which acts as the Proton acceptor. The Lowers pKa of active site Tyr role is filled by Lys-170.

It belongs to the short-chain dehydrogenases/reductases (SDR) family.

It functions in the pathway alkaloid biosynthesis; ergot alkaloid biosynthesis. Its function is as follows. Chanoclavine-I dehydrogenase; part of the gene cluster that mediates the biosynthesis of isofumigaclavines, fungal ergot alkaloids. The tryptophan dimethylallyltransferase ifgA catalyzes the first step of ergot alkaloid biosynthesis by condensing dimethylallyl diphosphate (DMAP) and tryptophan to form 4-dimethylallyl-L-tryptophan. The second step is catalyzed by the methyltransferase ifgB that methylates 4-dimethylallyl-L-tryptophan in the presence of S-adenosyl-L-methionine, resulting in the formation of N-methyl-dimethylallyl-L-tryptophan. The catalase ifgD and the FAD-dependent oxidoreductase ifgC then transform N-methyl-dimethylallyl-L-tryptophan to chanoclavine-I which is further oxidized by ifgE in the presence of NAD(+), resulting in the formation of chanoclavine-I aldehyde. The chanoclavine-I aldehyde reductases ifgG and/or fgaOx3 reduce chanoclavine-I aldehyde to dihydrochanoclavine-I aldehyde that spontaneously dehydrates to form 6,8-dimethyl-6,7-didehydroergoline. The festuclavine dehydrogenases ifgF1 and/or ifgF2 then catalyze the reduction of 6,8-dimethyl-6,7-didehydroergoline to form festuclavine. Hydrolysis of festuclavine by a yet undetermined cytochrome P450 monooxygenase (called ifgH) then leads to the formation of isofumigaclavine B which is in turn acetylated by ifgI to isofumigaclavine A. Penicillium roqueforti has interestingly at least two sets of genes for the consumption of chanoclavine-I aldehyde on three different loci, the OYEs ifgG/fgaOx3 and the festuclavine synthase homologs ifgF1/ifgF2. The reason for the duplication of these genes is unclear, probably to ensure the conversion of chanoclavine-I aldehyde by differential gene expression under various environmental conditions. This is Chanoclavine-I dehydrogenase ifgE from Penicillium roqueforti (strain FM164).